The following is a 474-amino-acid chain: Dihydrolipoyl dehydrogenase (474 aa).

Residues 34–42 (EKEKLGGTC), lysine 51, and glycine 114 contribute to the FAD site. A disulfide bridge links cysteine 42 with cysteine 47. Residues 188–192 (GGGVI), glutamate 211, valine 245, and 278–281 (SIGR) each bind NAD(+). FAD is bound by residues aspartate 320 and alanine 328. Residue histidine 453 is the Proton acceptor of the active site.

Belongs to the class-I pyridine nucleotide-disulfide oxidoreductase family. In terms of assembly, homodimer. FAD is required as a cofactor.

It localises to the cytoplasm. It carries out the reaction N(6)-[(R)-dihydrolipoyl]-L-lysyl-[protein] + NAD(+) = N(6)-[(R)-lipoyl]-L-lysyl-[protein] + NADH + H(+). In terms of biological role, the branched-chain alpha-keto dehydrogenase complex catalyzes the overall conversion of alpha-keto acids to acyl-CoA and CO(2). It contains multiple copies of 3 enzymatic components: branched-chain alpha-keto acid decarboxylase (E1), lipoamide acyltransferase (E2) and lipoamide dehydrogenase (E3). The sequence is that of Dihydrolipoyl dehydrogenase (bfmBC) from Bacillus subtilis (strain 168).